A 557-amino-acid chain; its full sequence is Formate--tetrahydrofolate ligase (557 aa).

Position 65 to 72 (65 to 72 (TPAGEGKT)) interacts with ATP.

This sequence belongs to the formate--tetrahydrofolate ligase family.

It carries out the reaction (6S)-5,6,7,8-tetrahydrofolate + formate + ATP = (6R)-10-formyltetrahydrofolate + ADP + phosphate. The protein operates within one-carbon metabolism; tetrahydrofolate interconversion. The polypeptide is Formate--tetrahydrofolate ligase (Zymomonas mobilis subsp. mobilis (strain ATCC 31821 / ZM4 / CP4)).